We begin with the raw amino-acid sequence, 188 residues long: Der GTPase-activating protein YihI (188 aa).

2 disordered regions span residues 1-80 (MKQP…VPVP) and 162-188 (DEDD…KDTF). A compositionally biased stretch (basic and acidic residues) spans 27 to 37 (TRDELDAEARD). The segment covering 47 to 57 (NRSGARTNVEG) has biased composition (polar residues).

It belongs to the YihI family. As to quaternary structure, interacts with Der.

In terms of biological role, a GTPase-activating protein (GAP) that modifies Der/EngA GTPase function. May play a role in ribosome biogenesis. The sequence is that of Der GTPase-activating protein YihI from Yersinia pseudotuberculosis serotype O:1b (strain IP 31758).